We begin with the raw amino-acid sequence, 185 residues long: Ribosome-recycling factor (185 aa).

Belongs to the RRF family.

It is found in the cytoplasm. Its function is as follows. Responsible for the release of ribosomes from messenger RNA at the termination of protein biosynthesis. May increase the efficiency of translation by recycling ribosomes from one round of translation to another. This Salmonella arizonae (strain ATCC BAA-731 / CDC346-86 / RSK2980) protein is Ribosome-recycling factor.